The primary structure comprises 401 residues: 8-amino-7-oxononanoate synthase (401 aa).

R24 serves as a coordination point for substrate. G111 to F112 is a pyridoxal 5'-phosphate binding site. H137 contributes to the substrate binding site. 3 residues coordinate pyridoxal 5'-phosphate: S183, H211, and T240. The residue at position 243 (K243) is an N6-(pyridoxal phosphate)lysine. Position 357 (T357) interacts with substrate.

This sequence belongs to the class-II pyridoxal-phosphate-dependent aminotransferase family. BioF subfamily. As to quaternary structure, homodimer. Pyridoxal 5'-phosphate serves as cofactor.

It carries out the reaction 6-carboxyhexanoyl-[ACP] + L-alanine + H(+) = (8S)-8-amino-7-oxononanoate + holo-[ACP] + CO2. The protein operates within cofactor biosynthesis; biotin biosynthesis. In terms of biological role, catalyzes the decarboxylative condensation of pimeloyl-[acyl-carrier protein] and L-alanine to produce 8-amino-7-oxononanoate (AON), [acyl-carrier protein], and carbon dioxide. In Xanthomonas campestris pv. campestris (strain B100), this protein is 8-amino-7-oxononanoate synthase.